Consider the following 305-residue polypeptide: Ribosomal RNA small subunit methyltransferase H (305 aa).

S-adenosyl-L-methionine is bound by residues 49–51, D68, F100, D116, and Q123; that span reads GGH.

It belongs to the methyltransferase superfamily. RsmH family.

It localises to the cytoplasm. The enzyme catalyses cytidine(1402) in 16S rRNA + S-adenosyl-L-methionine = N(4)-methylcytidine(1402) in 16S rRNA + S-adenosyl-L-homocysteine + H(+). Specifically methylates the N4 position of cytidine in position 1402 (C1402) of 16S rRNA. This is Ribosomal RNA small subunit methyltransferase H from Synechocystis sp. (strain ATCC 27184 / PCC 6803 / Kazusa).